Here is a 483-residue protein sequence, read N- to C-terminus: UDP-N-acetylmuramoyl-L-alanyl-D-glutamate--2,6-diaminopimelate ligase (483 aa).

Ser-29 is a binding site for UDP-N-acetyl-alpha-D-muramoyl-L-alanyl-D-glutamate. 107-113 (GTSGKTS) is a binding site for ATP. UDP-N-acetyl-alpha-D-muramoyl-L-alanyl-D-glutamate contacts are provided by residues 149–150 (TT), Ser-176, Gln-182, and Arg-184. Lys-216 is modified (N6-carboxylysine). Residues Arg-380, 404–407 (DNPR), Gly-452, and Glu-456 each bind meso-2,6-diaminopimelate. Positions 404 to 407 (DNPR) match the Meso-diaminopimelate recognition motif motif.

Belongs to the MurCDEF family. MurE subfamily. The cofactor is Mg(2+). Carboxylation is probably crucial for Mg(2+) binding and, consequently, for the gamma-phosphate positioning of ATP.

It localises to the cytoplasm. The catalysed reaction is UDP-N-acetyl-alpha-D-muramoyl-L-alanyl-D-glutamate + meso-2,6-diaminopimelate + ATP = UDP-N-acetyl-alpha-D-muramoyl-L-alanyl-gamma-D-glutamyl-meso-2,6-diaminopimelate + ADP + phosphate + H(+). Its pathway is cell wall biogenesis; peptidoglycan biosynthesis. Functionally, catalyzes the addition of meso-diaminopimelic acid to the nucleotide precursor UDP-N-acetylmuramoyl-L-alanyl-D-glutamate (UMAG) in the biosynthesis of bacterial cell-wall peptidoglycan. This is UDP-N-acetylmuramoyl-L-alanyl-D-glutamate--2,6-diaminopimelate ligase from Chelativorans sp. (strain BNC1).